The chain runs to 107 residues: Putative double-stranded DNA mimic protein HI_1450 (107 aa).

Belongs to the putative dsDNA mimic protein family. As to quaternary structure, monomer in solution. Interacts with the DNA-binding protein HU.

Functionally, may act as a double-stranded DNA (dsDNA) mimic. Probably regulates the activity of the DNA-binding protein HU. This chain is Putative double-stranded DNA mimic protein HI_1450, found in Haemophilus influenzae (strain ATCC 51907 / DSM 11121 / KW20 / Rd).